Reading from the N-terminus, the 701-residue chain is 1,4-alpha-glucan branching enzyme GlgB (701 aa).

D381 (nucleophile) is an active-site residue. The active-site Proton donor is the E434.

This sequence belongs to the glycosyl hydrolase 13 family. GlgB subfamily. Monomer.

It catalyses the reaction Transfers a segment of a (1-&gt;4)-alpha-D-glucan chain to a primary hydroxy group in a similar glucan chain.. It functions in the pathway glycan biosynthesis; glycogen biosynthesis. In terms of biological role, catalyzes the formation of the alpha-1,6-glucosidic linkages in glycogen by scission of a 1,4-alpha-linked oligosaccharide from growing alpha-1,4-glucan chains and the subsequent attachment of the oligosaccharide to the alpha-1,6 position. This is 1,4-alpha-glucan branching enzyme GlgB from Jannaschia sp. (strain CCS1).